Here is a 198-residue protein sequence, read N- to C-terminus: Transmembrane protein 9B (198 aa).

The first 33 residues, 1–33 (MATLWGGLLRLGSLLSLSCLALSVLLLAQLSDA), serve as a signal peptide directing secretion. Residue asparagine 60 is glycosylated (N-linked (GlcNAc...) asparagine). A helical membrane pass occupies residues 105-125 (IIIYLSILGLLLLYMVYLTLV). Phosphoserine is present on residues serine 142 and serine 189.

It belongs to the TMEM9 family. In terms of processing, N-glycosylated.

The protein resides in the lysosome membrane. It is found in the early endosome membrane. Enhances production of pro-inflammatory cytokines induced by TNF, IL1B, and TLR ligands. Has a role in TNF activation of both the NF-kappaB and MAPK pathways. The sequence is that of Transmembrane protein 9B (TMEM9B) from Homo sapiens (Human).